We begin with the raw amino-acid sequence, 406 residues long: Argininosuccinate synthase (406 aa).

ATP-binding positions include 14–22 (AYSGGLDTS) and Ala-41. The L-citrulline site is built by Tyr-92 and Ser-97. Gly-122 lines the ATP pocket. 3 residues coordinate L-aspartate: Thr-124, Asn-128, and Asp-129. Asn-128 contributes to the L-citrulline binding site. Positions 132, 181, 190, 266, and 278 each coordinate L-citrulline.

It belongs to the argininosuccinate synthase family. Type 1 subfamily. As to quaternary structure, homotetramer.

Its subcellular location is the cytoplasm. The enzyme catalyses L-citrulline + L-aspartate + ATP = 2-(N(omega)-L-arginino)succinate + AMP + diphosphate + H(+). Its pathway is amino-acid biosynthesis; L-arginine biosynthesis; L-arginine from L-ornithine and carbamoyl phosphate: step 2/3. In Geobacter sulfurreducens (strain ATCC 51573 / DSM 12127 / PCA), this protein is Argininosuccinate synthase.